Here is a 450-residue protein sequence, read N- to C-terminus: Putative zinc metalloprotease TP_0600 (450 aa).

Residue histidine 18 participates in Zn(2+) binding. Glutamate 19 is a catalytic residue. Position 22 (histidine 22) interacts with Zn(2+). Residues 102 to 124 form a helical membrane-spanning segment; it reads IAFAGPLANVLMAVMVLALVSAL. Residues 200–278 enclose the PDZ domain; it reads TITPDRDAHT…SVVLTVLRSG (79 aa). 2 helical membrane passes run 384–406 and 421–443; these read VCVS…LILF and VLYY…AFWN.

It belongs to the peptidase M50B family. Zn(2+) serves as cofactor.

It is found in the cell inner membrane. This is Putative zinc metalloprotease TP_0600 from Treponema pallidum (strain Nichols).